Reading from the N-terminus, the 183-residue chain is Negative modulator of initiation of replication (183 aa).

Positions 90–91 (AV) are interaction with DNA.

This sequence belongs to the SeqA family. Homodimer. Polymerizes to form helical filaments.

It localises to the cytoplasm. In terms of biological role, negative regulator of replication initiation, which contributes to regulation of DNA replication and ensures that replication initiation occurs exactly once per chromosome per cell cycle. Binds to pairs of hemimethylated GATC sequences in the oriC region, thus preventing assembly of replication proteins and re-initiation at newly replicated origins. Repression is relieved when the region becomes fully methylated. The chain is Negative modulator of initiation of replication from Shewanella oneidensis (strain ATCC 700550 / JCM 31522 / CIP 106686 / LMG 19005 / NCIMB 14063 / MR-1).